Consider the following 128-residue polypeptide: uncharacterized protein (128 aa).

The stretch at I95–K123 forms a coiled coil.

It localises to the cellular thylakoid membrane. This is an uncharacterized protein from Synechocystis sp. (strain ATCC 27184 / PCC 6803 / Kazusa).